Reading from the N-terminus, the 104-residue chain is uncharacterized protein (104 aa).

To A.aeolicus AQ_377.

This is an uncharacterized protein from Archaeoglobus fulgidus (strain ATCC 49558 / DSM 4304 / JCM 9628 / NBRC 100126 / VC-16).